Here is a 540-residue protein sequence, read N- to C-terminus: Phosphomethylpyrimidine synthase (540 aa).

Substrate is bound by residues N143, M172, Y201, H237, 257–259 (SRG), 298–301 (DGLR), and E337. H341 contributes to the Zn(2+) binding site. Substrate is bound at residue Y364. H405 contacts Zn(2+). [4Fe-4S] cluster-binding residues include C485, C488, and C493.

Belongs to the ThiC family. Requires [4Fe-4S] cluster as cofactor.

The catalysed reaction is 5-amino-1-(5-phospho-beta-D-ribosyl)imidazole + S-adenosyl-L-methionine = 4-amino-2-methyl-5-(phosphooxymethyl)pyrimidine + CO + 5'-deoxyadenosine + formate + L-methionine + 3 H(+). It functions in the pathway cofactor biosynthesis; thiamine diphosphate biosynthesis. In terms of biological role, catalyzes the synthesis of the hydroxymethylpyrimidine phosphate (HMP-P) moiety of thiamine from aminoimidazole ribotide (AIR) in a radical S-adenosyl-L-methionine (SAM)-dependent reaction. This chain is Phosphomethylpyrimidine synthase, found in Mycobacterium avium (strain 104).